Reading from the N-terminus, the 194-residue chain is Small ribosomal subunit protein eS7 (194 aa).

The protein belongs to the eukaryotic ribosomal protein eS7 family.

This Drosophila yakuba (Fruit fly) protein is Small ribosomal subunit protein eS7 (RpS7).